Reading from the N-terminus, the 284-residue chain is D-tagatose-1,6-bisphosphate aldolase subunit GatY (284 aa).

Aspartate 82 acts as the Proton donor in catalysis. Zn(2+) is bound by residues histidine 83 and histidine 180. Glycine 181 contacts dihydroxyacetone phosphate. Histidine 208 contacts Zn(2+). Dihydroxyacetone phosphate is bound by residues 209–211 and 230–233; these read GAS and NVAT.

It belongs to the class II fructose-bisphosphate aldolase family. TagBP aldolase GatY subfamily. Forms a complex with GatZ. The cofactor is Zn(2+).

The enzyme catalyses D-tagatofuranose 1,6-bisphosphate = D-glyceraldehyde 3-phosphate + dihydroxyacetone phosphate. It functions in the pathway carbohydrate metabolism; D-tagatose 6-phosphate degradation; D-glyceraldehyde 3-phosphate and glycerone phosphate from D-tagatose 6-phosphate: step 2/2. Functionally, catalytic subunit of the tagatose-1,6-bisphosphate aldolase GatYZ, which catalyzes the reversible aldol condensation of dihydroxyacetone phosphate (DHAP or glycerone-phosphate) with glyceraldehyde 3-phosphate (G3P) to produce tagatose 1,6-bisphosphate (TBP). Requires GatZ subunit for full activity and stability. Is involved in the catabolism of galactitol. In Shigella sonnei (strain Ss046), this protein is D-tagatose-1,6-bisphosphate aldolase subunit GatY.